Reading from the N-terminus, the 721-residue chain is Polyribonucleotide nucleotidyltransferase (721 aa).

Mg(2+) is bound by residues aspartate 495 and aspartate 501. A KH domain is found at 562-621 (PRLLSFRIDPELIGTVIGPGGRTIKGITERTNTKIDIEDSGIVTIASHDGAAAEEAQKII). The S1 motif domain maps to 631–699 (GEMFSGSITR…NRGRINLTLR (69 aa)). Positions 700–721 (GVPQSGESTEVEPQPTPVAPLS) are disordered.

This sequence belongs to the polyribonucleotide nucleotidyltransferase family. Mg(2+) serves as cofactor.

It is found in the cytoplasm. The catalysed reaction is RNA(n+1) + phosphate = RNA(n) + a ribonucleoside 5'-diphosphate. Its function is as follows. Involved in mRNA degradation. Catalyzes the phosphorolysis of single-stranded polyribonucleotides processively in the 3'- to 5'-direction. This chain is Polyribonucleotide nucleotidyltransferase, found in Synechococcus sp. (strain CC9902).